The chain runs to 306 residues: Peroxisome biogenesis factor 2 (306 aa).

The Peroxisomal matrix segment spans residues 1–15; the sequence is MAASENNMEEINPVL. A helical transmembrane segment spans residues 16–42; sequence RISQLDAIELNKALEQLIWSQFSSCFQ. Over 43 to 48 the chain is Cytoplasmic; that stretch reads GFKPGL. Residues 49–74 form a helical membrane-spanning segment; that stretch reads LTRFEPEIKASLCLFLWRYTIYTKNA. Topologically, residues 75 to 98 are peroxisomal matrix; sequence TVGQTILNMQYKNDLAVTKKYRPL. Residues 99 to 125 form a helical membrane-spanning segment; the sequence is NKQQKVWFALFLVGGKWLEERSFDLFS. The Cytoplasmic portion of the chain corresponds to 126-134; it reads NHPFGASFQ. A helical membrane pass occupies residues 135 to 161; sequence RTKYFLNAISGLLKFGALLNFLIFLQQ. Topologically, residues 162–188 are peroxisomal matrix; sequence GKFATLTERLLGIRSVFSRPQDVRQVG. Residues 189-212 traverse the membrane as a helical segment; the sequence is FEYMNREILWHGFAEFLIFLLPLI. Topologically, residues 213–306 are cytoplasmic; the sequence is NTQKLKSKLF…KIEISEVHTL (94 aa). Cysteine 245, cysteine 248, cysteine 260, histidine 262, cysteine 265, cysteine 268, cysteine 281, and cysteine 284 together coordinate Zn(2+). Residues 245 to 285 form an RING-type zinc finger; that stretch reads CCLCGEWPAMPHTIGCSHVFCYYCIKSNYMSDMYFTCPKCS.

The protein belongs to the pex2/pex10/pex12 family. In terms of assembly, component of the PEX2-PEX10-PEX12 retrotranslocation channel.

Its subcellular location is the peroxisome membrane. The enzyme catalyses [E2 ubiquitin-conjugating enzyme]-S-ubiquitinyl-L-cysteine + [acceptor protein]-L-cysteine = [E2 ubiquitin-conjugating enzyme]-L-cysteine + [acceptor protein]-S-ubiquitinyl-L-cysteine.. It carries out the reaction S-ubiquitinyl-[E2 ubiquitin-conjugating enzyme]-L-cysteine + [acceptor protein]-L-lysine = [E2 ubiquitin-conjugating enzyme]-L-cysteine + N(6)-ubiquitinyl-[acceptor protein]-L-lysine.. It participates in protein modification; protein ubiquitination. E3 ubiquitin-protein ligase component of a retrotranslocation channel required for peroxisome organization by mediating export of the PEX5 receptor from peroxisomes to the cytosol, thereby promoting PEX5 recycling. The retrotranslocation channel is composed of PEX2, PEX10 and PEX12; each subunit contributing transmembrane segments that coassemble into an open channel that specifically allows the passage of PEX5 through the peroxisomal membrane. PEX2 also regulates peroxisome organization by acting as a E3 ubiquitin-protein ligase. The polypeptide is Peroxisome biogenesis factor 2 (Xenopus laevis (African clawed frog)).